The following is a 26-amino-acid chain: Omega-conotoxin CVIC (26 aa).

3 disulfide bridges follow: Cys1–Cys16, Cys8–Cys20, and Cys15–Cys26. Position 26 is a cysteine amide (Cys26).

This sequence belongs to the conotoxin O1 superfamily. In terms of tissue distribution, expressed by the venom duct.

Its subcellular location is the secreted. In terms of biological role, omega-conotoxins act at presynaptic membranes, they bind and block voltage-gated calcium channels (Cav). This toxin blocks N-, P- and Q-type calcium channels. This chain is Omega-conotoxin CVIC, found in Conus catus (Cat cone).